The primary structure comprises 353 residues: UPF0658 Golgi apparatus membrane protein C23H3.04 (353 aa).

The next 8 helical transmembrane spans lie at 39–59 (IFFL…EGYC), 76–96 (SLPI…YLCV), 103–123 (NIIE…YSIV), 172–192 (PFLI…GFLA), 226–246 (LLKI…MVLP), 249–269 (AVVE…ILTL), 281–301 (LMMT…FKII), and 318–338 (MITT…AIGF).

Belongs to the UPF0658 family.

The protein resides in the golgi apparatus membrane. In Schizosaccharomyces pombe (strain 972 / ATCC 24843) (Fission yeast), this protein is UPF0658 Golgi apparatus membrane protein C23H3.04.